A 31-amino-acid polypeptide reads, in one-letter code: Hemocyanin subunit 2 (31 aa).

Belongs to the tyrosinase family. Hemocyanin subfamily. Hemolymph.

The protein resides in the secreted. Its subcellular location is the extracellular space. In terms of biological role, hemocyanins are copper-containing oxygen carriers occurring freely dissolved in the hemolymph of many mollusks and arthropods. The chain is Hemocyanin subunit 2 from Maja squinado (Mediterranean spider crab).